The following is a 2472-amino-acid chain: Centrosomal protein of 290 kDa (2472 aa).

The self-association (with itself or C-terminus) stretch occupies residues 1 to 689; the sequence is MPPNIKWKEL…MESKNAEGIF (689 aa). Coiled-coil stretches lie at residues 59–747, 1129–1392, and 1459–1492; these read MKMK…LRQS, RQRI…QQSK, and QVILKTQATCKSLEEKLKEKESALRLAEQNILSR. Residues 128–164 are disordered; sequence DRELEDMEKELDKEKKVNEQLALRNEEAENENSKLRR. Residues 137-164 show a composition bias toward basic and acidic residues; it reads ELDKEKKVNEQLALRNEEAENENSKLRR. The interaction with IQCB1 stretch occupies residues 690–890; that stretch reads DASLHLKAQV…TVLQVNEKSL (201 aa). Disordered regions lie at residues 1691 to 1713 and 2451 to 2472; these read AHKDSQSLKSELQAQKEANSRAP and PSPLAASEHSEDGESPHSFPIY. Over residues 1697–1713 the composition is skewed to polar residues; that stretch reads SLKSELQAQKEANSRAP. The tract at residues 1960 to 2472 is self-association (with itself or N-terminus); it reads TTGMTVDQVL…GESPHSFPIY (513 aa).

As to quaternary structure, part of the tectonic-like complex (also named B9 complex). Interacts with ATF4 via its N-terminal region. Associates with the BBSome complex, interacting (via N-terminus) with BBS4. Interacts with IQCB1/NPHP5; IQCB1 and CEP290/NPHP6 are proposed to form a functional NPHP5-6 module localized to the centrosome. Interacts with NPHP4; the interaction likely requires additional interactors. Interacts with ZNF423, FAM161A, CEP162, CEP162, CEP131, TALPID3, CCDC13, CC2D2A, RPGRIP1. Can self-associate (homo- or heteromeric). Interacts with CCP110; required for suppressing cilia formation. Interacts with RPGR. Associates (via C-terminus) with microtubules; association to microtubule is reduced in response to cellular stress, such as ultraviolet light (UV) radiation or heat shock, in a process that requires p38 MAP kinase signaling. Interacts with FAM161A. Interacts with PCM1. Interacts with CCDC66. Interacts with ARMC9 and CSPP1. In terms of processing, ubiquitinated. May undergo monoubiquitination; monoubiquitination is inhibited in response to cellular stress, such as ultraviolet light (UV) radiation or heat shock, but does not cause its displacement from centriolar satellites. As to expression, expressed in multiple organs during early postnatal development, with highest levels in hindbrain.

It localises to the cytoplasm. The protein localises to the cytoskeleton. Its subcellular location is the microtubule organizing center. The protein resides in the centrosome. It is found in the centriolar satellite. It localises to the nucleus. The protein localises to the centriole. Its subcellular location is the cell projection. The protein resides in the cilium. It is found in the cilium basal body. It localises to the cytoplasmic vesicle. In terms of biological role, involved in early and late steps in cilia formation. Its association with CCP110 is required for inhibition of primary cilia formation by CCP110. May play a role in early ciliogenesis in the disappearance of centriolar satellites and in the transition of primary ciliar vesicles (PCVs) to capped ciliary vesicles (CCVs). Required for the centrosomal recruitment of RAB8A and for the targeting of centriole satellite proteins to centrosomes such as of PCM1. Required for the correct localization of ciliary and phototransduction proteins in retinal photoreceptor cells; may play a role in ciliary transport processes. Required for efficient recruitment of RAB8A to primary cilium. In the ciliary transition zone is part of the tectonic-like complex (also named B9 complex) which is required for tissue-specific ciliogenesis and may regulate ciliary membrane composition. Involved in regulation of the BBSome complex integrity, specifically for presence of BBS2, BBS5 and BBS8/TTC8 in the complex, and in ciliary targeting of selected BBSome cargos. May play a role in controlling entry of the BBSome complex to cilia possibly implicating IQCB1/NPHP5. Activates ATF4-mediated transcription. The chain is Centrosomal protein of 290 kDa from Mus musculus (Mouse).